Here is a 1279-residue protein sequence, read N- to C-terminus: ATP-dependent helicase/nuclease subunit A (1279 aa).

One can recognise a UvrD-like helicase ATP-binding domain in the interval 4–499 (TKWTDEQRQA…VKLFKNFRSR (496 aa)). Position 25 to 32 (25 to 32 (AGAGAGKT)) interacts with ATP. Positions 526-853 (EEALKVGASY…RIMSIHKSKG (328 aa)) constitute a UvrD-like helicase C-terminal domain.

It belongs to the helicase family. AddA subfamily. As to quaternary structure, heterodimer of AddA and AddB/RexB. Mg(2+) serves as cofactor.

The catalysed reaction is Couples ATP hydrolysis with the unwinding of duplex DNA by translocating in the 3'-5' direction.. It carries out the reaction ATP + H2O = ADP + phosphate + H(+). Its function is as follows. The heterodimer acts as both an ATP-dependent DNA helicase and an ATP-dependent, dual-direction single-stranded exonuclease. Recognizes the chi site generating a DNA molecule suitable for the initiation of homologous recombination. The AddA nuclease domain is required for chi fragment generation; this subunit has the helicase and 3' -&gt; 5' nuclease activities. In Clostridium botulinum (strain Loch Maree / Type A3), this protein is ATP-dependent helicase/nuclease subunit A.